We begin with the raw amino-acid sequence, 351 residues long: Translation initiation factor eIF2B subunit beta (351 aa).

This sequence belongs to the eIF-2B alpha/beta/delta subunits family. Component of the translation initiation factor 2B (eIF2B) complex which is a heterodecamer of two sets of five different subunits: alpha, beta, gamma, delta and epsilon. Subunits alpha, beta and delta comprise a regulatory subcomplex and subunits epsilon and gamma comprise a catalytic subcomplex. Within the complex, the hexameric regulatory complex resides at the center, with the two heterodimeric catalytic subcomplexes bound on opposite sides.

It localises to the cytoplasm. The protein resides in the cytosol. Activated by the chemical integrated stress response (ISR) inhibitor ISRIB which stimulates guanine nucleotide exchange factor activity for both phosphorylated and unphosphorylated eIF2. Acts as a component of the translation initiation factor 2B (eIF2B) complex, which catalyzes the exchange of GDP for GTP on eukaryotic initiation factor 2 (eIF2) gamma subunit. Its guanine nucleotide exchange factor activity is repressed when bound to eIF2 complex phosphorylated on the alpha subunit, thereby limiting the amount of methionyl-initiator methionine tRNA available to the ribosome and consequently global translation is repressed. The chain is Translation initiation factor eIF2B subunit beta (EIF2B2) from Homo sapiens (Human).